The sequence spans 590 residues: Cytidine monophosphate-N-acetylneuraminic acid hydroxylase (590 aa).

Positions Leu-14–Leu-112 constitute a Rieske domain. Residues Cys-54, His-56, Cys-75, and His-78 each contribute to the [2Fe-2S] cluster site.

This sequence belongs to the CMP-Neu5Ac hydroxylase family. Requires [2Fe-2S] cluster as cofactor.

The protein resides in the cytoplasm. The catalysed reaction is CMP-N-acetyl-beta-neuraminate + 2 Fe(II)-[cytochrome b5] + O2 + 2 H(+) = CMP-N-glycoloyl-beta-neuraminate + 2 Fe(III)-[cytochrome b5] + H2O. The protein operates within amino-sugar metabolism; N-acetylneuraminate metabolism. Sialic acids are components of carbohydrate chains of glycoconjugates and are involved in cell-cell recognition and cell-pathogen interactions. Catalyzes the conversion of CMP-N-acetylneuraminic acid (CMP-Neu5Ac) into its hydroxylated derivative CMP-N-glycolylneuraminic acid (CMP-Neu5Gc), a sialic acid abundantly expressed at the surface of many cells. The chain is Cytidine monophosphate-N-acetylneuraminic acid hydroxylase from Pan troglodytes (Chimpanzee).